The primary structure comprises 114 residues: Cytochrome c oxidase subunit 7A2-like, mitochondrial (114 aa).

Residues 1 to 55 (MYYKFSGFTQKLAGAWASDAYSPQGLRPVVSTEAPPIIFATPTKLSSGPTAYDYA) constitute a mitochondrion transit peptide. An N6-acetyllysine modification is found at Lys69. Residues 82–107 (PDQMLYRTTMALTVGGTIYCLIALYM) traverse the membrane as a helical segment.

This sequence belongs to the cytochrome c oxidase VIIa family. Interacts with the mitochondrial respiratory complexes III (CIII) and IV (CIV), promoting their association.

It localises to the mitochondrion inner membrane. In terms of biological role, assembly factor that mediates the formation of some mitochondrial respiratory supercomplexes (respirasomes), thereby promoting oxidative phosphorylation and energy metabolism. Acts as a molecular adapter that associates with both mitochondrial respiratory complexes III (CIII) and IV (CIV), promoting their association. Mediates the formation of various mitochondrial respiratory supercomplexes, such as MCIII(2)IV(2), composed of two CIII and two CIV, and the CS-respirasome (MCI(1)III(2)IV(2)), composed of one CI, two CIII and two CIV. Not involved in the formation of the canonical respirasome (MCI(1)III(2)IV(1)), composed of one CI, two CIII and one CIV. The formation of different respirasomes is important for cell adaptation to oxygen conditions and prevent metabolic exhaustion: supercomplexes mediated by COX7A2L/SCAF1 are required to maintain oxidative phosphorylation upon low oxygen conditions and promote metabolic rewiring toward glycolysis. The polypeptide is Cytochrome c oxidase subunit 7A2-like, mitochondrial (Bos taurus (Bovine)).